The following is a 799-amino-acid chain: MPRRVRAQKRTAGVVEDEEVKAEQVRREHKAKQKQAVGSDAEQEEEELFPDSLHGPDSESDVTDDEQIDEEARQADRDLLKELVTLQGLNGEDPSDADNDDDDDEEEAASDDDDEEEDAEPSSDSSNEASDAGQEEGTTDPHTTTDDKASATTQMVVYSSDDDTSDEEHSLNRVGRIPMEWYEDYEHIGYDLNGKRIRKPKQKDRLEKFLDAFEAGNNGRTIYDPVTGKEIELTDDDINMIKRIQSGQLPDTGINPYEDYVDFFTHEKMQTPVVDKPEPKRRFVPSKWEHKKIMKIVRSIRKGLIKLPTSDDEKDKSSEEEQYYDVWGNEDDPNDPRIKVRQANHIAAPKVALPHHAESYNPPEEYLPTDAEAEKWRNAHEDDRERNYLPHKYGSLRLVPAYDQYIQERFHRCLDLYLCPRARRIRMNVDPEDLLPKLPKPEDLQPFPSAPSLVYRGHKARVTSISCDPTGQWLVSGSDDKTIRVWEISTGRCVRVVTVDAEVNMVAWCPNAGVSIVAVAHGHTVSLICPRVATAAIDKATAVLCNQSIEKPSQGAEEGMRATPTWNRIRGERQDQDGIFFEIPHHAEVMQVTWHHKGNYFASVMPRAETQSVCVHSLNRQSTQHPFQKRNRDVQRVLFHPTQPLFFVATKTHVRVYNLQAQALVKKLLTGVRWLSSLAIHPAGDNLIIGSYDKRLCWFDMDLSIKPYKILRYHKYALRQVCFHKKYPIFASCGDDGNVHVLHGMVYNDLGQNPLIVPVKIIKAHNQTSDGMGVMDCTFHPSQPWLFSAGSDGSIKLHV.

The segment at 1–171 (MPRRVRAQKR…DDTSDEEHSL (171 aa)) is disordered. Positions 58–69 (SESDVTDDEQID) are enriched in acidic residues. The segment covering 70 to 81 (EEARQADRDLLK) has biased composition (basic and acidic residues). Over residues 93–121 (DPSDADNDDDDDEEEAASDDDDEEEDAEP) the composition is skewed to acidic residues. Residues 122–132 (SSDSSNEASDA) show a composition bias toward low complexity. WD repeat units lie at residues 457 to 498 (GHKA…RVVT), 500 to 538 (DAEV…AAID), 584 to 626 (PHHA…TQHP), 629 to 669 (KRNR…KKLL), 670 to 709 (TGVR…KPYK), 713 to 752 (YHKY…DLGQ), and 769 to 799 (SDGM…KLHV).

It belongs to the WD repeat BOP1/ERB1 family.

Its subcellular location is the nucleus. It localises to the nucleolus. It is found in the nucleoplasm. Its function is as follows. Required for maturation of ribosomal RNAs and formation of the large ribosomal subunit. This chain is Ribosome biogenesis protein BOP1 homolog, found in Monosiga brevicollis (Choanoflagellate).